Here is a 95-residue protein sequence, read N- to C-terminus: Glutamine synthetase and cystathionine beta-lyase binding protein (95 aa).

Interacts with glutamine synthetase (TTHA1329) and cystathionine beta-lyase (TTHA1620), but proteins do not form a ternary complex.

Its function is as follows. Binds to glutamine synthetase and cystathionine beta-lyase. May be utilized for the efficient use of nitrogen in the global nitrogen regulation of T.thermophilus. This is Glutamine synthetase and cystathionine beta-lyase binding protein from Thermus thermophilus (strain ATCC 27634 / DSM 579 / HB8).